Here is a 402-residue protein sequence, read N- to C-terminus: Protein lag-2 (402 aa).

A signal peptide spans 1-15; it reads MIAYFLLLLTCLPVL. The Extracellular segment spans residues 16–279; it reads QARVEVHQEF…TTTTPTTVEI (264 aa). Residues asparagine 72 and asparagine 105 are each glycosylated (N-linked (GlcNAc...) asparagine). The region spanning 122–166 is the DSL domain; it reads VTCARNYFGNRCENFCDAHLAKAARKRCDAMGRLRCDIGWMGPHC. Cystine bridges form between cysteine 124/cysteine 133, cysteine 137/cysteine 149, cysteine 157/cysteine 166, cysteine 175/cysteine 183, cysteine 177/cysteine 204, cysteine 206/cysteine 215, cysteine 233/cysteine 245, cysteine 239/cysteine 254, and cysteine 256/cysteine 265. 2 consecutive EGF-like domains span residues 171–216 and 229–266; these read DPRK…TRCE and RPDA…EFCE. Asparagine 194 carries an N-linked (GlcNAc...) asparagine glycan. The chain crosses the membrane as a helical span at residues 280 to 306; the sequence is TVSTSGYSSAVYITVALFVIFSIIIGC. At 307–402 the chain is on the cytoplasmic side; sequence FKYKFKPMRQ…PPSIPACHYV (96 aa).

In terms of assembly, may interact with lin-12 / Notch receptor. Expressed in the gonad distal tip cell (DTC) of hermaphrodites.

The protein localises to the cell membrane. In terms of biological role, probable ligand for lin-12/Notch and glp-1/Notch receptors and involved in the mediation of Notch signaling. Involved in the lin-12/Notch pathway signaling of cell fate in vulval precursor cells (VPCs) and in the postembryonic mesodermal lineage (M lineage), acting redundantly with dsl-1 and apx-1. Functions in uterine cells to promote basement membrane mobility during tissue remodeling. Required for oocyte growth control, acting redundantly with apx-1, perhaps signaling via the glp-1/Notch pathway. Plays a role in Notch-dependent induction of left-right asymmetry in interneurons and motoneurons. Involved in maintaining the developmentally arrested larval state known as dauer, probably signaling in the glp-1/Notch pathway. Required for normal sleep bout quantity and arousal thresholds during the transition from the last larval stage to adulthood in well-fed animals. The polypeptide is Protein lag-2 (Caenorhabditis elegans).